The chain runs to 695 residues: Hypersensitivity response secretion protein HrpI (695 aa).

7 helical membrane-spanning segments follow: residues 21–38 (LVGAFFVIAIVFMMITPL), 45–61 (VLIAVNICISCLLIMLA), 68–92 (LAFSTFPAVLLLTTMFRLALSVSTT), 111–135 (FVVGGNLAVGLVIFLILTVVNFLVI), 203–223 (AIASLIIVAINMIGGISIGVL), 244–262 (GLIAQIPALLISVTSGMII), and 311–327 (VFITIAIICGAGGLLQL).

It belongs to the FHIPEP (flagella/HR/invasion proteins export pore) family.

It is found in the cell inner membrane. Involved in the secretion of harpin-pss; a proteinaceous elicitor of the hypersensitivity response in plants. The protein is Hypersensitivity response secretion protein HrpI (hrpI) of Pseudomonas syringae pv. syringae.